The following is a 480-amino-acid chain: Trigger factor (480 aa).

Residues 169-264 (GDIAVVDFKG…LKELKEKELP (96 aa)) form the PPIase FKBP-type domain. The segment at 441 to 480 (PEGSLSPAEETEAAESDADADVSQTEQENSEPSTTEVTEG) is disordered. Over residues 449–460 (EETEAAESDADA) the composition is skewed to acidic residues. Polar residues predominate over residues 462–480 (VSQTEQENSEPSTTEVTEG).

The protein belongs to the FKBP-type PPIase family. Tig subfamily.

It is found in the cytoplasm. It catalyses the reaction [protein]-peptidylproline (omega=180) = [protein]-peptidylproline (omega=0). Involved in protein export. Acts as a chaperone by maintaining the newly synthesized protein in an open conformation. Functions as a peptidyl-prolyl cis-trans isomerase. The protein is Trigger factor of Nostoc punctiforme (strain ATCC 29133 / PCC 73102).